Reading from the N-terminus, the 356-residue chain is GDP-mannose 4,6 dehydratase (356 aa).

NADP(+)-binding positions include Gly12–Asp17, Asp69–Leu70, Leu91–Ser95, and Tyr106. The active site involves Thr138. Catalysis depends on nucleophile residues Glu140 and Tyr162. NADP(+) contacts are provided by Lys166, His192, and Arg197.

It belongs to the NAD(P)-dependent epimerase/dehydratase family. GDP-mannose 4,6-dehydratase subfamily. NADP(+) is required as a cofactor.

The enzyme catalyses GDP-alpha-D-mannose = GDP-4-dehydro-alpha-D-rhamnose + H2O. The protein operates within nucleotide-sugar biosynthesis; GDP-L-fucose biosynthesis via de novo pathway; GDP-L-fucose from GDP-alpha-D-mannose: step 1/2. Participates in the synthesis of GDP-L-fucose, catalyzing the conversion of GDP-D-mannose to GDP-4-dehydro-6-deoxy-D-mannose (GDP-4-dehydro-alpha-D-rhamnose) which is further catalyzed by GDP-L-fucose synthase (ger). GDP-L-fucose is important for the synthesis of fucosylated N-glycans which are expressed on the cell surface. The polypeptide is GDP-mannose 4,6 dehydratase (gmd) (Dictyostelium discoideum (Social amoeba)).